A 599-amino-acid polypeptide reads, in one-letter code: Leucine zipper putative tumor suppressor 1 (599 aa).

Gly2 carries the N-myristoyl glycine lipid modification. Disordered regions lie at residues 135 to 190 (GAIL…TTSS) and 288 to 324 (EFAS…KSQR). A compositionally biased stretch (basic and acidic residues) spans 153–162 (PPDKPKEQEL). The segment covering 174 to 190 (SGRNSMSSLPTHSTTSS) has biased composition (polar residues). A coiled-coil region spans residues 256-572 (LSTDECTIQE…LEKALQQLAR (317 aa)). A compositionally biased stretch (basic and acidic residues) spans 288-313 (EFASGQTFEERPRRTRDELECLEPKS).

It belongs to the LZTS family. As to quaternary structure, binds EEF1G, TLK2 and CDK1. In terms of processing, phosphorylated on serine residues. Hyperphosphorylated by the cAMP-dependent kinase PKA during cell-cycle progression.

It is found in the cytoplasm. Its subcellular location is the cell membrane. The protein localises to the cell projection. The protein resides in the dendritic spine. It localises to the postsynaptic density. It is found in the synapse. Involved in the regulation of cell growth. May stabilize the active CDC2-cyclin B1 complex and thereby contribute to the regulation of the cell cycle and the prevention of uncontrolled cell proliferation. May act as tumor suppressor. The protein is Leucine zipper putative tumor suppressor 1 (Lzts1) of Mus musculus (Mouse).